Reading from the N-terminus, the 137-residue chain is Ribonuclease VapC18 (137 aa).

One can recognise a PINc domain in the interval 4–126; sequence CVDTSAWHHA…YDRVAAITGQ (123 aa). Mg(2+)-binding residues include D6 and D96.

The protein belongs to the PINc/VapC protein family. The cofactor is Mg(2+).

Functionally, toxic component of a type II toxin-antitoxin (TA) system. An RNase. The cognate antitoxin is VapB18. The protein is Ribonuclease VapC18 of Mycobacterium tuberculosis (strain ATCC 25618 / H37Rv).